We begin with the raw amino-acid sequence, 426 residues long: MELFSQSSRPVAKVMKSIRPVDFMHYVLVRFFQHNCTQIAGSLTFTTLLSLVPMLAIGLSVIAAFPAFAEFSDRIKEFILTTMVPEAANKVISVYMQQFADNAAKLTAIGIAFLGVTALALMLTIDEALNSIWRVSRLRPLLHRLLIYWSVLTIGPLLIGASLSLTSWLMTASRGFTRDIPGGDIMLLRLSPLVLTSIAFSASYLIVPNRQVAWRHAIAGGVAAAIGFEIMKEGFAFYITRFPTYQAVYGTFATIPIFLLWLYLSWLMVLLGAVIAASLSSWRFREWRDDPNARGKQFFDALRLLGILGEALKAGKVETALSLQQQLMLSPEEVERILELMVKANFVRQVQEGGWVQILDPAEIRIADVYRLFAFRPEALRGTAGGDTRLEQLLDDIAVGIDEKMSLPLSQLFTSAEPEPPAEMSA.

Helical transmembrane passes span 48-68, 106-126, 145-165, 187-207, 217-237, and 255-275; these read LLSLVPMLAIGLSVIAAFPAF, LTAIGIAFLGVTALALMLTID, LLIYWSVLTIGPLLIGASLSL, LLRLSPLVLTSIAFSASYLIV, AIAGGVAAAIGFEIMKEGFAF, and IPIFLLWLYLSWLMVLLGAVI.

This sequence belongs to the UPF0761 family.

The protein localises to the cell inner membrane. This Nitrosospira multiformis (strain ATCC 25196 / NCIMB 11849 / C 71) protein is UPF0761 membrane protein Nmul_A0452.